A 237-amino-acid chain; its full sequence is UDP-2,3-diacylglucosamine hydrolase (237 aa).

Mn(2+) contacts are provided by aspartate 8, histidine 10, aspartate 41, asparagine 78, and histidine 113. 78-79 lines the substrate pocket; it reads NR. Substrate is bound by residues aspartate 121, serine 159, glutamine 164, and histidine 195. Mn(2+) contacts are provided by histidine 195 and histidine 197.

Belongs to the LpxH family. Mn(2+) serves as cofactor.

The protein resides in the cell inner membrane. The catalysed reaction is UDP-2-N,3-O-bis[(3R)-3-hydroxytetradecanoyl]-alpha-D-glucosamine + H2O = 2-N,3-O-bis[(3R)-3-hydroxytetradecanoyl]-alpha-D-glucosaminyl 1-phosphate + UMP + 2 H(+). It functions in the pathway glycolipid biosynthesis; lipid IV(A) biosynthesis; lipid IV(A) from (3R)-3-hydroxytetradecanoyl-[acyl-carrier-protein] and UDP-N-acetyl-alpha-D-glucosamine: step 4/6. Functionally, hydrolyzes the pyrophosphate bond of UDP-2,3-diacylglucosamine to yield 2,3-diacylglucosamine 1-phosphate (lipid X) and UMP by catalyzing the attack of water at the alpha-P atom. Involved in the biosynthesis of lipid A, a phosphorylated glycolipid that anchors the lipopolysaccharide to the outer membrane of the cell. The polypeptide is UDP-2,3-diacylglucosamine hydrolase (Chromobacterium violaceum (strain ATCC 12472 / DSM 30191 / JCM 1249 / CCUG 213 / NBRC 12614 / NCIMB 9131 / NCTC 9757 / MK)).